A 337-amino-acid chain; its full sequence is Anthranilate phosphoribosyltransferase (337 aa).

5-phospho-alpha-D-ribose 1-diphosphate is bound by residues G81, 84-85, S89, 91-94, 109-117, and A121; these read GD, NVST, and KHGNRAATS. G81 contacts anthranilate. S93 contributes to the Mg(2+) binding site. N112 is an anthranilate binding site. Residue R167 participates in anthranilate binding. The Mg(2+) site is built by D226 and E227.

It belongs to the anthranilate phosphoribosyltransferase family. In terms of assembly, homodimer. It depends on Mg(2+) as a cofactor.

The enzyme catalyses N-(5-phospho-beta-D-ribosyl)anthranilate + diphosphate = 5-phospho-alpha-D-ribose 1-diphosphate + anthranilate. The protein operates within amino-acid biosynthesis; L-tryptophan biosynthesis; L-tryptophan from chorismate: step 2/5. Functionally, catalyzes the transfer of the phosphoribosyl group of 5-phosphorylribose-1-pyrophosphate (PRPP) to anthranilate to yield N-(5'-phosphoribosyl)-anthranilate (PRA). In Methylorubrum extorquens (strain CM4 / NCIMB 13688) (Methylobacterium extorquens), this protein is Anthranilate phosphoribosyltransferase.